Consider the following 327-residue polypeptide: Phenylalanine--tRNA ligase alpha subunit (327 aa).

Residue Glu252 participates in Mg(2+) binding.

This sequence belongs to the class-II aminoacyl-tRNA synthetase family. Phe-tRNA synthetase alpha subunit type 1 subfamily. As to quaternary structure, tetramer of two alpha and two beta subunits. Mg(2+) is required as a cofactor.

It localises to the cytoplasm. The catalysed reaction is tRNA(Phe) + L-phenylalanine + ATP = L-phenylalanyl-tRNA(Phe) + AMP + diphosphate + H(+). This is Phenylalanine--tRNA ligase alpha subunit from Sodalis glossinidius (strain morsitans).